We begin with the raw amino-acid sequence, 368 residues long: uncharacterized protein (368 aa).

Residues 237-287 (ESLSIPSRRRPSSIAPIGTRPSRKEIAFSNSSTPTDQTLRPPNPPAANGNA) form a disordered region. A compositionally biased stretch (low complexity) spans 238 to 253 (SLSIPSRRRPSSIAPI). Polar residues predominate over residues 264–276 (FSNSSTPTDQTLR).

This is an uncharacterized protein from Schizosaccharomyces pombe (strain 972 / ATCC 24843) (Fission yeast).